A 241-amino-acid polypeptide reads, in one-letter code: Outer membrane protein A (241 aa).

5 consecutive transmembrane segments (beta stranded) span residues 1–8, 13–21, 46–55, 60–67, and 86–94; these read LTAKLSYP, LDIYTRLGG, PVFAGGVEYA, IATRLEYQ, and MLSVGVSYR. 4 consecutive repeat copies span residues 105-106, 107-108, 109-110, and 111-112. Residues 105–112 are 4 X 2 AA tandem repeats of A-P; the sequence is APAPAPAP. One can recognise an OmpA-like domain in the interval 114–241; it reads VQTKHFTLKS…RRVEIEVKGV (128 aa). Residues C215 and C227 are joined by a disulfide bond.

This sequence belongs to the outer membrane OOP (TC 1.B.6) superfamily. OmpA family. Monomer and homodimer.

It localises to the cell outer membrane. Functionally, with TolR probably plays a role in maintaining the position of the peptidoglycan cell wall in the periplasm. Acts as a porin with low permeability that allows slow penetration of small solutes; an internal gate slows down solute passage. This Shimwellia blattae (Escherichia blattae) protein is Outer membrane protein A.